The primary structure comprises 682 residues: Methionine--tRNA ligase (682 aa).

The 'HIGH' region signature appears at 14-24 (PYANGPVHLGH). Zn(2+)-binding residues include Cys-145, Cys-148, Cys-158, and Cys-161. Positions 331-335 (KMSKS) match the 'KMSKS' region motif. Lys-334 is an ATP binding site. Residues 580-682 (AFAAVDLRVA…SGAKPGQRIK (103 aa)) enclose the tRNA-binding domain.

It belongs to the class-I aminoacyl-tRNA synthetase family. MetG type 1 subfamily. As to quaternary structure, homodimer. Zn(2+) is required as a cofactor.

Its subcellular location is the cytoplasm. The enzyme catalyses tRNA(Met) + L-methionine + ATP = L-methionyl-tRNA(Met) + AMP + diphosphate. Functionally, is required not only for elongation of protein synthesis but also for the initiation of all mRNA translation through initiator tRNA(fMet) aminoacylation. This chain is Methionine--tRNA ligase, found in Pseudomonas syringae pv. tomato (strain ATCC BAA-871 / DC3000).